The chain runs to 525 residues: Serine/threonine protein phosphatase 2A 55 kDa regulatory subunit B beta isoform (525 aa).

Positions 1–31 (MDPFSKSPDDDDLRPEAEAARRPQPQPQPRE) are disordered. WD repeat units lie at residues 48-87 (QEVDIISAIEFDKSGDHLATGDRGGRVVLFERTDSRDSAS) and 124-165 (EIEE…VKRI). The tract at residues 169–191 (NLNTSQSSGNGTTSSSSSSSSRA) is disordered. The span at 171–189 (NTSQSSGNGTTSSSSSSSS) shows a compositional bias: low complexity. WD repeat units lie at residues 244–282 (AHDYHINSISNNSDGETYISADDLRINLWNLEISNQSFN), 293–333 (DLTE…LCDN), 352–390 (EIIASVSDIKFARDGRHILSRDYMTLKLWDINMDSGPVA), and 495–525 (DLSTKLLHLAWHPTENSIACAAANSLYMYYA).

Belongs to the phosphatase 2A regulatory subunit B family. PP2A consists of a common heteromeric enzyme, composed of a catalytic subunit (subunits C), a constant regulatory subunit (subunit A), and a variety of regulatory subunits such as subunits B (the R2/B/PR55/B55, R3/B''/PR72/PR130/PR59 and R5/B'/B56 families).

In terms of biological role, the B regulatory subunit may modulate substrate selectivity and catalytic activity, and may also direct the localization of the catalytic enzyme to a particular subcellular compartment. The protein is Serine/threonine protein phosphatase 2A 55 kDa regulatory subunit B beta isoform of Oryza sativa subsp. indica (Rice).